Consider the following 61-residue polypeptide: Small ribosomal subunit protein uS14B (61 aa).

Zn(2+) contacts are provided by C24, C27, C40, and C43.

This sequence belongs to the universal ribosomal protein uS14 family. Zinc-binding uS14 subfamily. Part of the 30S ribosomal subunit. Contacts proteins S3 and S10. Requires Zn(2+) as cofactor.

Binds 16S rRNA, required for the assembly of 30S particles and may also be responsible for determining the conformation of the 16S rRNA at the A site. The polypeptide is Small ribosomal subunit protein uS14B (Lactococcus lactis subsp. lactis (strain IL1403) (Streptococcus lactis)).